We begin with the raw amino-acid sequence, 328 residues long: L-tyrosine isonitrile synthase (328 aa).

It belongs to the isocyanide synthase family. In terms of assembly, monomer in solution.

It catalyses the reaction D-ribulose 5-phosphate + L-tyrosine = (2S)-3-(4-hydroxyphenyl)-2-isocyanopropanoate + hydroxyacetone + formaldehyde + phosphate + H2O + H(+). In terms of biological role, involved in the biosynthesis of paerucumarin, a cyclized isocyano derivative of tyrosine. Responsible for the synthesis of the isonitrile group on tyrosine using the C2 of ribulose 5-phosphate as the source of the carbon atom. The protein is L-tyrosine isonitrile synthase of Pseudomonas aeruginosa (strain ATCC 15692 / DSM 22644 / CIP 104116 / JCM 14847 / LMG 12228 / 1C / PRS 101 / PAO1).